We begin with the raw amino-acid sequence, 786 residues long: MIPSQSNSFSGSVITLYFFLLGSLVLRTLASSRLHYCRHDQRDALLEFKHEFPVSESKPSPSLSSWNKTSDCCFWEGVTCDDESGEVVSLDLSYVLLNNSLKPTSGLFKLQQLQNLTLSDCHLYGEVTSSLGNLSRLTHLDLSSNQLTGEVLASVSKLNQLRDLLLSENSFSGNIPTSFTNLTKLSSLDISSNQFTLENFSFILPNLTSLSSLNVASNHFKSTLPSDMSGLHNLKYFDVRENSFVGTFPTSLFTIPSLQIVYLEGNQFMGPIKFGNISSSSRLWDLNLADNKFDGPIPEYISEIHSLIVLDLSHNNLVGPIPTSISKLVNLQHLSLSNNTLEGEVPGCLWGLMTVTLSHNSFNSFGKSSSGALDGESMQELDLGSNSLGGPFPHWICKQRFLKYLDLSNNLFNGSIPPCLKNSTYWLKGLVLRNNSFSGFLPDVFVNASMLLSLDVSYNRLEGKLPKSLINCTGMELLNVGSNIIKDTFPSWLVSLPSLRVLILRSNAFYGSLYYDHISFGFQHLRLIDISQNGFSGTLSPLYFSNWREMVTSVLEENGSNIGTEDWYMGEKGPEFSHSNSMTMIYKGVETDFLRIPYFFRAIDFSGNRFFGNIPESVGLLKELRLLNLSGNSFTSNIPQSLANLTNLETLDLSRNQLSGHIPRDLGSLSFLSTMNFSHNLLEGPVPLGTQFQSQHCSTFMDNLRLYGLEKICGKAHAPSSTPLESEEFSEPEEQVINWIAAAIAYGPGVFCGLVIGHIFFTAHKHEWFMEKFHRNKRRVVTTSAR.

The first 30 residues, M1–A30, serve as a signal peptide directing secretion. The Extracellular portion of the chain corresponds to S31–W739. N67, N98, N115, and N133 each carry an N-linked (GlcNAc...) asparagine glycan. 4 LRR repeats span residues L110–N133, L134–L158, N159–N181, and T183–L204. N181, N199, and N206 each carry an N-linked (GlcNAc...) asparagine glycan. LRR repeat units lie at residues L207–L231, N233–I255, S257–S279, S280–I304, H305–L328, V329–L352, T354–G375, E376–Q399, R400–S423, Y425–N447, A448–C472, G474–L496, P497–H524, and R526–N546. N-linked (GlcNAc...) asparagine glycosylation occurs at N276. A glycan (N-linked (GlcNAc...) asparagine) is linked at N338. N-linked (GlcNAc...) asparagine glycans are attached at residues N413, N422, N434, N447, and N471. Residue N558 is glycosylated (N-linked (GlcNAc...) asparagine). 4 LRR repeats span residues I596 to L621, K622 to L645, T646 to L669, and F671 to S694. 2 N-linked (GlcNAc...) asparagine glycosylation sites follow: N628 and N644. An N-linked (GlcNAc...) asparagine glycan is attached at N676. A helical transmembrane segment spans residues I740–F760. Residues F761–R786 lie on the Cytoplasmic side of the membrane.

It belongs to the RLP family.

It localises to the cell membrane. Its function is as follows. Receptor for microbe-associated molecular patterns (MAMPs) that induces a BAK1-dependent basal immune response to necrotrophic fungi (e.g. S.sclerotiorum) in the presence of MAMPs (e.g. flg22 and SCLEROTINIA CULTURE FILTRATE ELICITOR1 (SCFE1) from the necrotrophic fungal pathogen S.sclerotiorum). Functionality seems to depend on the presence of the receptor kinase SOBIR1 as an adapter protein. Required for full non-host resistance to bacterial pathogens (e.g. P.syringae pv phaseolicola). The protein is Receptor-like protein 30 of Arabidopsis thaliana (Mouse-ear cress).